Consider the following 398-residue polypeptide: Na(+)/H(+) antiporter NhaA 2 (398 aa).

A run of 11 helical transmembrane segments spans residues 17–37 (ILLMLAVAMAMLLANSPLAGL), 59–79 (LLLWVNDGLMALFFLLIGLEV), 95–115 (SLPTFAAIGGMVFPALVYLGF), 125–145 (GWAIPAATDIAFALGVLALLG), 154–174 (VFLLALAIIDDIGVIVIIALF), 179–199 (LSITSLVIAAIAIGSMVILNL), 213–233 (LLLWIAVLKSGVHATLAGVVI), 262–282 (FMILPLFAFANAGLSLSGMSL), 288–308 (PAALGVMLGLLLGKPLGVLLF), 331–351 (AVAVLCGVGFTMSIFISSLAF), and 364–384 (LGTLVGSMLSASIAYFWLTKV).

This sequence belongs to the NhaA Na(+)/H(+) (TC 2.A.33) antiporter family.

Its subcellular location is the cell inner membrane. It catalyses the reaction Na(+)(in) + 2 H(+)(out) = Na(+)(out) + 2 H(+)(in). Its function is as follows. Na(+)/H(+) antiporter that extrudes sodium in exchange for external protons. This is Na(+)/H(+) antiporter NhaA 2 from Shewanella denitrificans (strain OS217 / ATCC BAA-1090 / DSM 15013).